The primary structure comprises 305 residues: RNA-binding protein with serine-rich domain 1 (305 aa).

Positions 1–10 are enriched in basic residues; the sequence is MDLSGVKKKS. A necessary for interaction with SRP54, nuclear localization and exon-skipping region spans residues 1–161; the sequence is MDLSGVKKKS…KRRSPSPKPT (161 aa). The disordered stretch occupies residues 1–170; that stretch reads MDLSGVKKKS…TKVHIGRLTR (170 aa). The tract at residues 1–220 is necessary for interaction with the cleaved p110 isoform of CDC2L1; that stretch reads MDLSGVKKKS…ENPDEAEKAL (220 aa). Glycyl lysine isopeptide (Lys-Gly) (interchain with G-Cter in SUMO2) cross-links involve residues Lys-7 and Lys-15. Residues 33–59 are compositionally biased toward basic and acidic residues; sequence DRSDEKSKDRSKDKGATKESSEKDRGR. Ser-53 carries the phosphoserine; by CK2 modification. Low complexity predominate over residues 68 to 126; that stretch reads ASSGSSSTRSRSSSTSSSGSSTSTGSSSGSSSSSASSRSGSSSTSRSSSSSSSSGSPSP. The interval 69 to 121 is necessary for interactions with UPF2 and UPF3B and UPF2-dependent NMD; the sequence is SSGSSSTRSRSSSTSSSGSSTSTGSSSGSSSSSASSRSGSSSTSRSSSSSSSS. Basic residues-rich tracts occupy residues 127–143 and 151–167; these read SRRR…KSKP and RKRR…HIGR. Ser-155 and Ser-157 each carry phosphoserine. Residues 156-242 form a necessary for interaction with PNN and exon-skipping region; it reads PSPKPTKVHI…ITATAVLAPW (87 aa). Residues 159–244 are interaction with SAP18 and ACIN1; sequence KPTKVHIGRL…ATAVLAPWPR (86 aa). Thr-161 carries the phosphothreonine modification. In terms of domain architecture, RRM spans 161 to 240; the sequence is TKVHIGRLTR…QEITATAVLA (80 aa). N6-acetyllysine is present on Lys-218. Positions 238-305 are necessary for interaction with TRA2B, nuclear localization and exon-skipping; sequence VLAPWPRPPP…RSRSSSNSSR (68 aa). The interval 240–305 is disordered; sequence APWPRPPPRR…RSRSSSNSSR (66 aa). Residues 242–262 show a composition bias toward pro residues; the sequence is WPRPPPRRFSPPRRMLPPPPM. Residues 266-298 show a composition bias toward basic residues; the sequence is SPPRMRRRSRSPRRRSPVRRRSRSPGRRRHRSR.

The protein belongs to the splicing factor SR family. As to quaternary structure, found in mRNA splicing-dependent exon junction complexes (EJC). Found in a post-splicing complex with NXF1, RBM8A, UPF1, UPF2, UPF3A, UPF3B and RNPS1. Component of the heterotrimeric ASAP (apoptosis- and splicing-associated protein) and PSAP complexes consisting of RNPS1, SAP18 and either ACIN1 or PNN, respectively; the ASAP and PSAP complexes probably are formed mutually exclusive. Component of the active spliceosome. Associates with polysomes. Interacts with the cleaved p110 isoform of CDC2L1, CSNK2A1, PNN, SART3, SRP54, SRRM1 and TRA2B/SFRS10. Phosphorylated on one or more of the four Ser/Thr residues (Ser-43, Thr-49, Ser-52 or Ser-53). Ser-53 phosphorylation site is important for splicing and translation stimulation activity in vitro. In terms of tissue distribution, ubiquitous.

It is found in the nucleus. The protein localises to the nucleus speckle. It localises to the cytoplasm. In terms of biological role, part of pre- and post-splicing multiprotein mRNP complexes. Auxiliary component of the splicing-dependent multiprotein exon junction complex (EJC) deposited at splice junction on mRNAs. The EJC is a dynamic structure consisting of core proteins and several peripheral nuclear and cytoplasmic associated factors that join the complex only transiently either during EJC assembly or during subsequent mRNA metabolism. Component of the ASAP and PSAP complexes which bind RNA in a sequence-independent manner and are proposed to be recruited to the EJC prior to or during the splicing process and to regulate specific excision of introns in specific transcription subsets. The ASAP complex can inhibit RNA processing during in vitro splicing reactions. The ASAP complex promotes apoptosis and is disassembled after induction of apoptosis. Enhances the formation of the ATP-dependent A complex of the spliceosome. Involved in both constitutive splicing and, in association with SRP54 and TRA2B/SFRS10, in distinctive modulation of alternative splicing in a substrate-dependent manner. Involved in the splicing modulation of BCL2L1/Bcl-X (and probably other apoptotic genes); specifically inhibits formation of proapoptotic isoforms such as Bcl-X(S); the activity is different from the established EJC assembly and function. Participates in mRNA 3'-end cleavage. Involved in UPF2-dependent nonsense-mediated decay (NMD) of mRNAs containing premature stop codons. Also mediates increase of mRNA abundance and translational efficiency. Binds spliced mRNA 20-25 nt upstream of exon-exon junctions. In Homo sapiens (Human), this protein is RNA-binding protein with serine-rich domain 1 (RNPS1).